The following is a 120-amino-acid chain: Large ribosomal subunit protein uL18 (120 aa).

The span at 1 to 20 (MKSTRKSATQRRHRRLRRHL) shows a compositional bias: basic residues. The disordered stretch occupies residues 1–26 (MKSTRKSATQRRHRRLRRHLSGTSER).

The protein belongs to the universal ribosomal protein uL18 family. Part of the 50S ribosomal subunit; part of the 5S rRNA/L5/L18/L25 subcomplex. Contacts the 5S and 23S rRNAs.

Its function is as follows. This is one of the proteins that bind and probably mediate the attachment of the 5S RNA into the large ribosomal subunit, where it forms part of the central protuberance. This is Large ribosomal subunit protein uL18 from Synechocystis sp. (strain ATCC 27184 / PCC 6803 / Kazusa).